A 1755-amino-acid polypeptide reads, in one-letter code: Deleted in lung and esophageal cancer protein 1 (1755 aa).

Positions 1 to 12 are enriched in basic residues; sequence METRSSKTRRSL. 3 disordered regions span residues 1 to 39, 1339 to 1360, and 1529 to 1553; these read METR…PSQP, PGPS…GSSS, and SQDG…EETA. Over residues 30–39 the composition is skewed to low complexity; that stretch reads PAGSSSPSQP.

Interacts with alpha- and beta-tubulin. Interacts with BBS2, BBS4, BBS5, MKKS, TCP1, CCT2, CCT3, CCT4, CCT5 and CCT7. Expressed in all tissues examined. Expression is highest in prostate and testis.

It localises to the cytoplasm. In terms of biological role, essential for spermatogenesis and male fertility. May play an important role in sperm head and tail formation. May act as a tumor suppressor by inhibiting cell proliferation. The chain is Deleted in lung and esophageal cancer protein 1 from Homo sapiens (Human).